The sequence spans 424 residues: CinA-like protein (424 aa).

It belongs to the CinA family.

The polypeptide is CinA-like protein (Shewanella loihica (strain ATCC BAA-1088 / PV-4)).